We begin with the raw amino-acid sequence, 315 residues long: HPr kinase/phosphorylase (315 aa).

Residues H140 and K161 contribute to the active site. 155 to 162 (GDSGVGKS) is an ATP binding site. S162 provides a ligand contact to Mg(2+). The Proton acceptor; for phosphorylation activity. Proton donor; for dephosphorylation activity role is filled by D179. Residues 203 to 212 (LEIRGIGIID) are important for the catalytic mechanism of both phosphorylation and dephosphorylation. E204 is a Mg(2+) binding site. Residue R245 is part of the active site. Residues 266–271 (PVKTGR) are important for the catalytic mechanism of dephosphorylation.

The protein belongs to the HPrK/P family. Homohexamer. It depends on Mg(2+) as a cofactor.

It catalyses the reaction [HPr protein]-L-serine + ATP = [HPr protein]-O-phospho-L-serine + ADP + H(+). The enzyme catalyses [HPr protein]-O-phospho-L-serine + phosphate + H(+) = [HPr protein]-L-serine + diphosphate. In terms of biological role, catalyzes the ATP- as well as the pyrophosphate-dependent phosphorylation of a specific serine residue in HPr, a phosphocarrier protein of the phosphoenolpyruvate-dependent sugar phosphotransferase system (PTS). HprK/P also catalyzes the pyrophosphate-producing, inorganic phosphate-dependent dephosphorylation (phosphorolysis) of seryl-phosphorylated HPr (P-Ser-HPr). The two antagonistic activities of HprK/P are regulated by several intracellular metabolites, which change their concentration in response to the absence or presence of rapidly metabolisable carbon sources (glucose, fructose, etc.) in the growth medium. Therefore, by controlling the phosphorylation state of HPr, HPrK/P is a sensor enzyme that plays a major role in the regulation of carbon metabolism and sugar transport: it mediates carbon catabolite repression (CCR), and regulates PTS-catalyzed carbohydrate uptake and inducer exclusion. The sequence is that of HPr kinase/phosphorylase from Lactiplantibacillus plantarum (strain ATCC BAA-793 / NCIMB 8826 / WCFS1) (Lactobacillus plantarum).